We begin with the raw amino-acid sequence, 677 residues long: Methionine--tRNA ligase (677 aa).

Residues 15–25 (PYANGSIHLGH) carry the 'HIGH' region motif. Residues Cys146, Cys149, Cys159, and Cys162 each contribute to the Zn(2+) site. The 'KMSKS' region motif lies at 333–337 (KMSKS). Residue Lys336 participates in ATP binding. A tRNA-binding domain is found at 575-677 (DFAKVDLRVA…DGAKPGQQVK (103 aa)).

This sequence belongs to the class-I aminoacyl-tRNA synthetase family. MetG type 1 subfamily. In terms of assembly, homodimer. Zn(2+) serves as cofactor.

The protein localises to the cytoplasm. The catalysed reaction is tRNA(Met) + L-methionine + ATP = L-methionyl-tRNA(Met) + AMP + diphosphate. Is required not only for elongation of protein synthesis but also for the initiation of all mRNA translation through initiator tRNA(fMet) aminoacylation. The sequence is that of Methionine--tRNA ligase from Citrobacter koseri (strain ATCC BAA-895 / CDC 4225-83 / SGSC4696).